The sequence spans 235 residues: Exosome complex component Rrp4 (235 aa).

The 73-residue stretch at 67-139 (GDVVIGLIQS…KTRSPLLTVQ (73 aa)) folds into the S1 motif domain. The KH domain maps to 149–205 (GKIVEISPAKVPRVIGRKMSMLKTLEEKTECKIFVARNGRIHLECPNEDLEAIAVMA).

The protein belongs to the RRP4 family. Component of the archaeal exosome complex. Forms a trimer of Rrp4 and/or Csl4 subunits. The trimer associates with a hexameric ring-like arrangement composed of 3 Rrp41-Rrp42 heterodimers.

It is found in the cytoplasm. In terms of biological role, non-catalytic component of the exosome, which is a complex involved in RNA degradation. Increases the RNA binding and the efficiency of RNA degradation. Confers strong poly(A) specificity to the exosome. This chain is Exosome complex component Rrp4, found in Aeropyrum pernix (strain ATCC 700893 / DSM 11879 / JCM 9820 / NBRC 100138 / K1).